The following is a 713-amino-acid chain: Transcription activator of gluconeogenesis CPC735_053490 (713 aa).

Residues 1–70 (MTANAINGPV…NAKDPLRPRR (70 aa)) are disordered. Positions 19 to 56 (GDNNKSADTTMADQGTRPESQPQGQNNGAKPQNGQTKP) are enriched in polar residues. Positions 77–105 (CFACQRAHLTCGDERPCQRCIKRGIQNAC) form a DNA-binding region, zn(2)-C6 fungal-type. Polar residues predominate over residues 145-159 (PLTRNGSNSKTNFYP). Disordered regions lie at residues 145–229 (PLTR…ASGQ), 274–318 (GAGE…LFGD), 541–564 (GGSS…GMDI), and 623–665 (GTTS…QRKW). Over residues 160 to 171 (QQQSSFNNFYQN) the composition is skewed to low complexity. Polar residues predominate over residues 191–212 (FPSQSPVSPTFNMTANPAASGN). Positions 213-229 (QGLPSSLSASNSNASGQ) are enriched in low complexity. Composition is skewed to polar residues over residues 295 to 312 (SGTY…TGQP), 541 to 558 (GGSS…SFTP), and 649 to 659 (GASNGQSQHSL).

It belongs to the ERT1/acuK family.

The protein localises to the nucleus. Functionally, transcription factor which regulates nonfermentable carbon utilization. Activator of gluconeogenetic genes. This Coccidioides posadasii (strain C735) (Valley fever fungus) protein is Transcription activator of gluconeogenesis CPC735_053490.